Reading from the N-terminus, the 203-residue chain is Elongation factor Ts (203 aa).

Residues 80 to 83 (TDFV) form an involved in Mg(2+) ion dislocation from EF-Tu region.

The protein belongs to the EF-Ts family.

The protein resides in the cytoplasm. Functionally, associates with the EF-Tu.GDP complex and induces the exchange of GDP to GTP. It remains bound to the aminoacyl-tRNA.EF-Tu.GTP complex up to the GTP hydrolysis stage on the ribosome. The chain is Elongation factor Ts from Moorella thermoacetica (strain ATCC 39073 / JCM 9320).